We begin with the raw amino-acid sequence, 137 residues long: Putative pre-16S rRNA nuclease (137 aa).

It belongs to the YqgF nuclease family.

The protein resides in the cytoplasm. In terms of biological role, could be a nuclease involved in processing of the 5'-end of pre-16S rRNA. The protein is Putative pre-16S rRNA nuclease of Actinobacillus pleuropneumoniae serotype 7 (strain AP76).